We begin with the raw amino-acid sequence, 286 residues long: General stress protein A (286 aa).

Residues 12 to 17 (CADDNY) and 111 to 112 (DC) contribute to the UDP site. Asp111, Asp113, and His247 together coordinate Mn(2+). 247–253 (HFCGGEK) lines the UDP pocket.

This sequence belongs to the glycosyltransferase 8 family.

The protein is General stress protein A (gspA) of Bacillus subtilis (strain 168).